The sequence spans 545 residues: Capsular polysaccharide phosphotransferase SacB (545 aa).

This sequence belongs to the stealth family.

May be the polymerase that links individual UDP-N-acetyl-D-mannosamine monomers. In serotype A the capsule is composed of repeated units of (alpha 1-6)-linked N-acetyl-D-mannosamine-1-phosphate. The chain is Capsular polysaccharide phosphotransferase SacB (sacB) from Neisseria meningitidis serogroup A.